A 223-amino-acid polypeptide reads, in one-letter code: PKHD-type hydroxylase syc1482_d (223 aa).

A Fe2OG dioxygenase domain is found at 78 to 176; it reads RVHSLLFSRY…RFACVGWVQS (99 aa). The Fe cation site is built by histidine 96, aspartate 98, and histidine 157. Residue arginine 167 participates in 2-oxoglutarate binding.

Fe(2+) is required as a cofactor. It depends on L-ascorbate as a cofactor.

The protein is PKHD-type hydroxylase syc1482_d of Synechococcus sp. (strain ATCC 27144 / PCC 6301 / SAUG 1402/1) (Anacystis nidulans).